The following is a 688-amino-acid chain: Potassium-transporting ATPase ATP-binding subunit (688 aa).

A run of 4 helical transmembrane segments spans residues Pro34–Leu54, Ala62–Ala82, Val219–Leu239, and Val260–Ile280. Asp313 (4-aspartylphosphate intermediate) is an active-site residue. ATP is bound by residues Asp350, Glu354, Phe383 to Ser390, and Lys401. Residues Asp524 and Asp528 each contribute to the Mg(2+) site. 3 consecutive transmembrane segments (helical) span residues Phe594–Met614, Ala622–Leu642, and Gly667–Met687.

It belongs to the cation transport ATPase (P-type) (TC 3.A.3) family. Type IA subfamily. As to quaternary structure, the system is composed of three essential subunits: KdpA, KdpB and KdpC.

It localises to the cell inner membrane. The catalysed reaction is K(+)(out) + ATP + H2O = K(+)(in) + ADP + phosphate + H(+). Functionally, part of the high-affinity ATP-driven potassium transport (or Kdp) system, which catalyzes the hydrolysis of ATP coupled with the electrogenic transport of potassium into the cytoplasm. This subunit is responsible for energy coupling to the transport system and for the release of the potassium ions to the cytoplasm. In Yersinia enterocolitica serotype O:8 / biotype 1B (strain NCTC 13174 / 8081), this protein is Potassium-transporting ATPase ATP-binding subunit.